A 583-amino-acid polypeptide reads, in one-letter code: Cysteine/serine-rich nuclear protein 1 (583 aa).

Disordered stretches follow at residues 1 to 79 (MTGL…APRE) and 306 to 381 (AESL…RSGV). Over residues 18–41 (SSSSSSSFSSRLSLSSFPASSASP) the composition is skewed to low complexity. Residues 54–69 (APQSDQDSCGLQSFTP) are compositionally biased toward polar residues. Positions 335-361 (PVSSELGDSSCSSDMTDSSTTLSSGSS) are enriched in low complexity. Positions 364-373 (PNHPAHPSLP) are enriched in pro residues.

It belongs to the AXUD1 family. As to expression, widely expressed with highest levels in thymus and lung. Low levels detected in naive T-cells.

Its subcellular location is the nucleus. Its function is as follows. Binds to the consensus sequence 5'-AGAGTG-3' and has transcriptional activator activity. May have a tumor-suppressor function. May play a role in apoptosis. The polypeptide is Cysteine/serine-rich nuclear protein 1 (Csrnp1) (Mus musculus (Mouse)).